The primary structure comprises 459 residues: UDP-N-acetylmuramoylalanine--D-glutamate ligase (459 aa).

Residue 119–125 (GTNGKTT) coordinates ATP.

Belongs to the MurCDEF family.

It is found in the cytoplasm. It carries out the reaction UDP-N-acetyl-alpha-D-muramoyl-L-alanine + D-glutamate + ATP = UDP-N-acetyl-alpha-D-muramoyl-L-alanyl-D-glutamate + ADP + phosphate + H(+). Its pathway is cell wall biogenesis; peptidoglycan biosynthesis. Its function is as follows. Cell wall formation. Catalyzes the addition of glutamate to the nucleotide precursor UDP-N-acetylmuramoyl-L-alanine (UMA). This chain is UDP-N-acetylmuramoylalanine--D-glutamate ligase, found in Lactiplantibacillus plantarum (strain ATCC BAA-793 / NCIMB 8826 / WCFS1) (Lactobacillus plantarum).